The primary structure comprises 411 residues: LL-diaminopimelate aminotransferase (411 aa).

The substrate site is built by tyrosine 15 and glycine 42. Pyridoxal 5'-phosphate contacts are provided by residues tyrosine 72, 108 to 109, tyrosine 132, asparagine 188, tyrosine 219, and 247 to 249; these read AK and SFS. Substrate-binding residues include lysine 109, tyrosine 132, and asparagine 188. Lysine 250 carries the post-translational modification N6-(pyridoxal phosphate)lysine. Residues arginine 258 and asparagine 293 each contribute to the pyridoxal 5'-phosphate site. The substrate site is built by asparagine 293 and arginine 389.

The protein belongs to the class-I pyridoxal-phosphate-dependent aminotransferase family. LL-diaminopimelate aminotransferase subfamily. As to quaternary structure, homodimer. It depends on pyridoxal 5'-phosphate as a cofactor.

It carries out the reaction (2S,6S)-2,6-diaminopimelate + 2-oxoglutarate = (S)-2,3,4,5-tetrahydrodipicolinate + L-glutamate + H2O + H(+). The protein operates within amino-acid biosynthesis; L-lysine biosynthesis via DAP pathway; LL-2,6-diaminopimelate from (S)-tetrahydrodipicolinate (aminotransferase route): step 1/1. Functionally, involved in the synthesis of meso-diaminopimelate (m-DAP or DL-DAP), required for both lysine and peptidoglycan biosynthesis. Catalyzes the direct conversion of tetrahydrodipicolinate to LL-diaminopimelate. The protein is LL-diaminopimelate aminotransferase of Desulfitobacterium hafniense (strain Y51).